The primary structure comprises 212 residues: Ras-related protein RABC1 (212 aa).

The residue at position 2 (Gly2) is an N-acetylglycine. A GTP-binding site is contributed by 20-27 (GDSGVGKS). Positions 41–49 (LSPTIGVDF) match the Effector region motif. GTP-binding positions include 67–71 (DTAGQ), 127–130 (NKVD), and 157–158 (SA). The disordered stretch occupies residues 182–212 (TAEGSSGGKKNIFKQNPAQTTSTSSSYCCSS). The span at 201-212 (TTSTSSSYCCSS) shows a compositional bias: low complexity. 2 S-geranylgeranyl cysteine lipidation sites follow: Cys209 and Cys210.

Belongs to the small GTPase superfamily. Rab family.

The protein localises to the cell membrane. In terms of biological role, intracellular vesicle trafficking and protein transport. This Arabidopsis thaliana (Mouse-ear cress) protein is Ras-related protein RABC1 (RABC1).